Consider the following 657-residue polypeptide: Receptor-type tyrosine-protein phosphatase R (657 aa).

An N-terminal signal peptide occupies residues 1-21 (MRRAVCFPALCLLLNLHAAGC). At 22–227 (FSGNNDHFLA…EADKIWSKEG (206 aa)) the chain is on the extracellular side. A glycan (O-linked (Xyl...) (chondroitin sulfate) serine) is linked at Ser23. The N-linked (GlcNAc...) asparagine glycan is linked to Asn129. Residues 228 to 248 (FYAVVIFLSIFVIIVTCLMIL) traverse the membrane as a helical segment. Over 249–657 (YRLKERFQLS…ESRLSAETVQ (409 aa)) the chain is Cytoplasmic. A Phosphoserine modification is found at Ser272. Ser339 is subject to Phosphoserine; by PKA. Positions 393–647 (LQSEFMEIPM…EFVHHALCLY (255 aa)) constitute a Tyrosine-protein phosphatase domain. Substrate is bound by residues Asp554, 588–594 (CSAGIGR), and Gln632. Catalysis depends on Cys588, which acts as the Phosphocysteine intermediate.

It belongs to the protein-tyrosine phosphatase family. Receptor class 7 subfamily. Interacts with MAPKs. As to expression, detected in cerebrospinal fluid (at protein level). Expressed in brain, placenta, small intestine, stomach, uterus and weakly in the prostate. Isoform alpha has been observed only in the brain. Isoform gamma is expressed in brain, placenta and uterus. Isoform delta is expressed in brain, kidney, placenta, prostate, small intestine and uterus.

Its subcellular location is the secreted. It localises to the cell membrane. It is found in the cytoplasm. The protein localises to the perinuclear region. The enzyme catalyses O-phospho-L-tyrosyl-[protein] + H2O = L-tyrosyl-[protein] + phosphate. Its function is as follows. Sequesters mitogen-activated protein kinases (MAPKs) such as MAPK1, MAPK3 and MAPK14 in the cytoplasm in an inactive form. The MAPKs bind to a dephosphorylated kinase interacting motif, phosphorylation of which by the protein kinase A complex releases the MAPKs for activation and translocation into the nucleus. In Homo sapiens (Human), this protein is Receptor-type tyrosine-protein phosphatase R (PTPRR).